The primary structure comprises 462 residues: GTPase Der (462 aa).

2 EngA-type G domains span residues 9 to 171 (KTIA…GLTK) and 201 to 372 (IQVG…ECFS). GTP-binding positions include 15–22 (GQPNVGKS), 62–66 (DTGGM), 123–126 (NKID), 207–214 (GRVNVGKS), 254–258 (DTAGI), and 318–321 (NKWD). One can recognise a KH-like domain in the interval 373 to 457 (KRIPTSLLNS…PLIINAKDKK (85 aa)).

It belongs to the TRAFAC class TrmE-Era-EngA-EngB-Septin-like GTPase superfamily. EngA (Der) GTPase family. Associates with the 50S ribosomal subunit.

GTPase that plays an essential role in the late steps of ribosome biogenesis. The protein is GTPase Der of Helicobacter acinonychis (strain Sheeba).